A 154-amino-acid polypeptide reads, in one-letter code: Myoglobin (154 aa).

The region spanning 2–148 is the Globin domain; sequence GLSDQEWQQV…FRNDMASKYK (147 aa). Position 65 (H65) interacts with nitrite. H65 contributes to the O2 binding site. H94 contacts heme b.

The protein belongs to the globin family. As to quaternary structure, monomeric.

Its subcellular location is the cytoplasm. The protein resides in the sarcoplasm. It carries out the reaction Fe(III)-heme b-[protein] + nitric oxide + H2O = Fe(II)-heme b-[protein] + nitrite + 2 H(+). It catalyses the reaction H2O2 + AH2 = A + 2 H2O. In terms of biological role, monomeric heme protein which primary function is to store oxygen and facilitate its diffusion within muscle tissues. Reversibly binds oxygen through a pentacoordinated heme iron and enables its timely and efficient release as needed during periods of heightened demand. Depending on the oxidative conditions of tissues and cells, and in addition to its ability to bind oxygen, it also has a nitrite reductase activity whereby it regulates the production of bioactive nitric oxide. Under stress conditions, like hypoxia and anoxia, it also protects cells against reactive oxygen species thanks to its pseudoperoxidase activity. The protein is Myoglobin (MB) of Aethia pygmaea (Whiskered auklet).